A 409-amino-acid chain; its full sequence is Nucleoprotein (409 aa).

Disordered stretches follow at residues M1–N32, L44–K63, G120–S145, and R164–E193. Residues P15 to G31 are compositionally biased toward low complexity. The segment at S29 to I160 is RNA-binding. The region spanning G31–D156 is the CoV N NTD domain. A compositionally biased stretch (low complexity) spans R164 to A179. Over residues P180 to A192 the composition is skewed to basic and acidic residues. S190 carries the phosphoserine; by host modification. Residues T215 to P331 enclose the CoV N CTD domain. The tract at residues R226 to D333 is dimerization. Cysteines 320 and 323 form a disulfide. The segment at V327–L409 is disordered. The segment covering R341 to P355 has biased composition (polar residues). Residues K368–N384 show a composition bias toward basic and acidic residues. T378 is subject to Phosphothreonine; by host. S379 bears the Phosphoserine; by host mark.

It belongs to the gammacoronavirus nucleocapsid protein family. As to quaternary structure, homooligomer. Both monomeric and oligomeric forms interact with RNA. Interacts with protein M. Interacts with NSP3; this interaction serves to tether the genome to the newly translated replicase-transcriptase complex at a very early stage of infection. ADP-ribosylated. The ADP-ribosylation is retained in the virion during infection. Post-translationally, phosphorylated on serine and threonine residues.

Its subcellular location is the virion. It localises to the host endoplasmic reticulum-Golgi intermediate compartment. The protein resides in the host Golgi apparatus. Packages the positive strand viral genome RNA into a helical ribonucleocapsid (RNP) and plays a fundamental role during virion assembly through its interactions with the viral genome and membrane protein M. Plays an important role in enhancing the efficiency of subgenomic viral RNA transcription as well as viral replication. This Avian infectious bronchitis virus (strain D1466) (IBV) protein is Nucleoprotein.